A 452-amino-acid polypeptide reads, in one-letter code: GTPase Obg (452 aa).

The Obg domain occupies M1–M158. Disordered regions lie at residues G66 to I87 and A117 to G143. The region spanning A159–A338 is the OBG-type G domain. Residues G165–S172, F190–N194, D212–G215, N282–D285, and S319–A321 each bind GTP. The Mg(2+) site is built by S172 and T192. An OCT domain is found at I376–Q452.

It belongs to the TRAFAC class OBG-HflX-like GTPase superfamily. OBG GTPase family. In terms of assembly, monomer. Mg(2+) is required as a cofactor.

It is found in the cytoplasm. Its function is as follows. An essential GTPase which binds GTP, GDP and possibly (p)ppGpp with moderate affinity, with high nucleotide exchange rates and a fairly low GTP hydrolysis rate. Plays a role in control of the cell cycle, stress response, ribosome biogenesis and in those bacteria that undergo differentiation, in morphogenesis control. This Natranaerobius thermophilus (strain ATCC BAA-1301 / DSM 18059 / JW/NM-WN-LF) protein is GTPase Obg.